Consider the following 303-residue polypeptide: Ribosomal RNA small subunit methyltransferase H (303 aa).

S-adenosyl-L-methionine-binding positions include 36–38 (CGH), D55, F81, D101, and Q108.

The protein belongs to the methyltransferase superfamily. RsmH family.

The protein localises to the cytoplasm. The enzyme catalyses cytidine(1402) in 16S rRNA + S-adenosyl-L-methionine = N(4)-methylcytidine(1402) in 16S rRNA + S-adenosyl-L-homocysteine + H(+). Functionally, specifically methylates the N4 position of cytidine in position 1402 (C1402) of 16S rRNA. The polypeptide is Ribosomal RNA small subunit methyltransferase H (Aster yellows witches'-broom phytoplasma (strain AYWB)).